The chain runs to 283 residues: Chromatin modification-related protein png1 (283 aa).

Residues 137-171 (YSPSGASSARQTPAPSRSGASTAGRRRTSATTRGA) show a composition bias toward low complexity. The segment at 137 to 224 (YSPSGASSAR…NEMVSEEDME (88 aa)) is disordered. Polar residues predominate over residues 181–216 (YTASLADSGSTRGQKVSNATATTQLETKADSTTPNE). The PHD-type zinc-finger motif lies at 228–277 (EKYCFCQQGSYGQMVACDNANCEREWFHMECVGLKAPPEGTWYCEACRDQ). Zn(2+) is bound by residues C231, C233, C244, C249, H255, C258, C271, and C274.

This sequence belongs to the ING family. Interacts with H3K4me3 and to a lesser extent with H3K4me2. Component of a histone deacetylase complex.

It is found in the nucleus. Component of a histone deacetylase complex responsible for the deacetylation of lysine residues on the N-terminal part of the core histones (H2A, H2B, H3 and H4). Histone deacetylation gives a tag for epigenetic repression and plays an important role in transcriptional regulation, cell cycle progression and developmental events. Has a role in silencing of mating type genes. The protein is Chromatin modification-related protein png1 (png1) of Schizosaccharomyces pombe (strain 972 / ATCC 24843) (Fission yeast).